Consider the following 191-residue polypeptide: Nascent polypeptide-associated complex subunit alpha (191 aa).

The 66-residue stretch at 24 to 89 (SRPERKARKA…AKVEDPNSAA (66 aa)) folds into the NAC-A/B domain. The segment at 126–149 (QDAPSADSSAPAPSGEATDASASG) is disordered. Residues 127–139 (DAPSADSSAPAPS) show a composition bias toward low complexity. The 39-residue stretch at 153 to 191 (VSDEEIQLIVAQTGVDEAKAREAYISEKGDLINAIMKLQ) folds into the UBA domain.

Belongs to the NAC-alpha family. Part of the nascent polypeptide-associated complex (NAC), consisting of EGD2 and EGD1. NAC associates with ribosomes via EGD1.

It localises to the cytoplasm. Its subcellular location is the nucleus. In terms of biological role, component of the nascent polypeptide-associated complex (NAC), a dynamic component of the ribosomal exit tunnel, protecting the emerging polypeptides from interaction with other cytoplasmic proteins to ensure appropriate nascent protein targeting. The NAC complex also promotes mitochondrial protein import by enhancing productive ribosome interactions with the outer mitochondrial membrane and blocks the inappropriate interaction of ribosomes translating non-secretory nascent polypeptides with translocation sites in the membrane of the endoplasmic reticulum. EGD2 may also be involved in transcription regulation. The sequence is that of Nascent polypeptide-associated complex subunit alpha (EGD2) from Cryptococcus neoformans var. neoformans serotype D (strain B-3501A) (Filobasidiella neoformans).